A 179-amino-acid polypeptide reads, in one-letter code: Transmembrane protein 196 (179 aa).

The next 4 helical transmembrane spans lie at 11–31 (LLVL…VGAV), 44–61 (LGDS…ILCA), 67–87 (LVMI…ILNF), and 100–120 (LYPL…GCTL).

It is found in the cytoplasm. It localises to the membrane. Functionally, acts as a tumor suppressor in lung cancer. Inhibits tumor cell growth by inhibiting cell proliferation and migration and promoting cell apoptosis. Inhibits metastasis of lung cancer by suppressing beta-catenin expression in the Wnt/beta-catenin signaling pathway. The protein is Transmembrane protein 196 (TMEM196) of Pongo abelii (Sumatran orangutan).